We begin with the raw amino-acid sequence, 210 residues long: Thymidylate kinase (210 aa).

11–18 is an ATP binding site; the sequence is GLEGAGKS.

The protein belongs to the thymidylate kinase family.

The enzyme catalyses dTMP + ATP = dTDP + ADP. Phosphorylation of dTMP to form dTDP in both de novo and salvage pathways of dTTP synthesis. This is Thymidylate kinase from Vibrio campbellii (strain ATCC BAA-1116).